A 460-amino-acid chain; its full sequence is Ribosomal protein uS12 methylthiotransferase RimO (460 aa).

Positions 16–130 (NKIHFISLGC…ILSAIESKES (115 aa)) constitute an MTTase N-terminal domain. [4Fe-4S] cluster-binding residues include Cys25, Cys61, Cys93, Cys164, Cys168, and Cys171. In terms of domain architecture, Radical SAM core spans 150 to 382 (STPKHYAYLK…SQTQKKNVEK (233 aa)). The region spanning 385-455 (KQFVGKIVEA…GYDLVGRVVN (71 aa)) is the TRAM domain.

The protein belongs to the methylthiotransferase family. RimO subfamily. It depends on [4Fe-4S] cluster as a cofactor.

The protein localises to the cytoplasm. It carries out the reaction L-aspartate(89)-[ribosomal protein uS12]-hydrogen + (sulfur carrier)-SH + AH2 + 2 S-adenosyl-L-methionine = 3-methylsulfanyl-L-aspartate(89)-[ribosomal protein uS12]-hydrogen + (sulfur carrier)-H + 5'-deoxyadenosine + L-methionine + A + S-adenosyl-L-homocysteine + 2 H(+). Its function is as follows. Catalyzes the methylthiolation of an aspartic acid residue of ribosomal protein uS12. This chain is Ribosomal protein uS12 methylthiotransferase RimO, found in Chlamydia abortus (strain DSM 27085 / S26/3) (Chlamydophila abortus).